A 393-amino-acid chain; its full sequence is Cobalt-precorrin-5B C(1)-methyltransferase (393 aa).

The interval M1–F35 is disordered. Over residues E18–N31 the composition is skewed to basic and acidic residues.

The protein belongs to the CbiD family.

It carries out the reaction Co-precorrin-5B + S-adenosyl-L-methionine = Co-precorrin-6A + S-adenosyl-L-homocysteine. It functions in the pathway cofactor biosynthesis; adenosylcobalamin biosynthesis; cob(II)yrinate a,c-diamide from sirohydrochlorin (anaerobic route): step 6/10. Functionally, catalyzes the methylation of C-1 in cobalt-precorrin-5B to form cobalt-precorrin-6A. The protein is Cobalt-precorrin-5B C(1)-methyltransferase of Dechloromonas aromatica (strain RCB).